A 429-amino-acid polypeptide reads, in one-letter code: Phosphomethylpyrimidine synthase (429 aa).

Substrate contacts are provided by residues Asn66, Met94, Tyr123, His162, 184-186 (SRG), 225-228 (DALR), and Glu264. Position 268 (His268) interacts with Zn(2+). Residue Tyr291 participates in substrate binding. His332 provides a ligand contact to Zn(2+). Residues Cys408, Cys411, and Cys415 each contribute to the [4Fe-4S] cluster site.

This sequence belongs to the ThiC family. Requires [4Fe-4S] cluster as cofactor.

The catalysed reaction is 5-amino-1-(5-phospho-beta-D-ribosyl)imidazole + S-adenosyl-L-methionine = 4-amino-2-methyl-5-(phosphooxymethyl)pyrimidine + CO + 5'-deoxyadenosine + formate + L-methionine + 3 H(+). It participates in cofactor biosynthesis; thiamine diphosphate biosynthesis. Catalyzes the synthesis of the hydroxymethylpyrimidine phosphate (HMP-P) moiety of thiamine from aminoimidazole ribotide (AIR) in a radical S-adenosyl-L-methionine (SAM)-dependent reaction. The sequence is that of Phosphomethylpyrimidine synthase from Sulfurisphaera tokodaii (strain DSM 16993 / JCM 10545 / NBRC 100140 / 7) (Sulfolobus tokodaii).